The primary structure comprises 190 residues: MRGLRPALSTFLFLLLITGGVYPLLTTALGQWWFPWQANGSLIREGDTVRGSALIGQNFTGNGYFHGRPSATAEMPYNPQASGGSNLAVSNPELDKQIAARVAALRAANPDASTNVPVELVTASASGLDNNITPQAAAWQIPRVAKARNLSVEQLTQLIAKYSQQPLVKYIGQPVVNIVELNLALDKLDE.

Residues 10-30 (TFLFLLLITGGVYPLLTTALG) traverse the membrane as a helical segment.

Belongs to the KdpC family. As to quaternary structure, the system is composed of three essential subunits: KdpA, KdpB and KdpC.

The protein resides in the cell inner membrane. Part of the high-affinity ATP-driven potassium transport (or Kdp) system, which catalyzes the hydrolysis of ATP coupled with the electrogenic transport of potassium into the cytoplasm. This subunit acts as a catalytic chaperone that increases the ATP-binding affinity of the ATP-hydrolyzing subunit KdpB by the formation of a transient KdpB/KdpC/ATP ternary complex. The chain is Potassium-transporting ATPase KdpC subunit from Escherichia coli O6:H1 (strain CFT073 / ATCC 700928 / UPEC).